The sequence spans 209 residues: Cytidylate kinase (209 aa).

7–15 (GVAASGKSS) is an ATP binding site.

This sequence belongs to the cytidylate kinase family. Type 1 subfamily.

Its subcellular location is the cytoplasm. The catalysed reaction is CMP + ATP = CDP + ADP. It catalyses the reaction dCMP + ATP = dCDP + ADP. The chain is Cytidylate kinase from Deinococcus geothermalis (strain DSM 11300 / CIP 105573 / AG-3a).